A 338-amino-acid polypeptide reads, in one-letter code: POU domain, class 4, transcription factor 3 (338 aa).

The POU-IV box motif lies at 56–65 (RAEALAAVDI). The interval 91–112 (TSPTVPISHPAALTSHPHHPVH) is disordered. In terms of domain architecture, POU-specific spans 179 to 256 (DVESDPRELE…VLQAWLEEAE (78 aa)). Positions 274–333 (RKRKRTSIAAPEKRSLEAYFAIQPRPSSEKIAAIAEKLDLKKNVVRVWFCNQRQKQKRMK) form a DNA-binding region, homeobox.

This sequence belongs to the POU transcription factor family. As to quaternary structure, interacts with ISL1. Expressed in the chochlea of the inner ear.

The protein localises to the nucleus. Its subcellular location is the cytoplasm. In terms of biological role, acts as a transcriptional activator. Acts by binding to sequences related to the consensus octamer motif 5'-ATGCAAAT-3' in the regulatory regions of its target genes. Involved in the auditory system development, required for terminal differentiation of hair cells in the inner ear. In Rattus norvegicus (Rat), this protein is POU domain, class 4, transcription factor 3.